Consider the following 326-residue polypeptide: rRNA 2'-O-methyltransferase fibrillarin (326 aa).

Residues 1–84 form a disordered region; that stretch reads MAFQPGSRGG…GGARGGAKGG (84 aa). Positions 7 to 83 are enriched in gly residues; the sequence is SRGGRGGARG…RGGARGGAKG (77 aa). An asymmetric dimethylarginine mark is found at Arg-8, Arg-11, Arg-15, Arg-19, Arg-23, Arg-26, Arg-32, Arg-36, Arg-39, Arg-45, Arg-49, Arg-55, Arg-59, Arg-63, Arg-67, Arg-71, Arg-74, and Arg-78. S-adenosyl-L-methionine is bound by residues 180–181, 199–200, 224–225, and 244–247; these read TS, EF, DA, and DVAQ.

It belongs to the methyltransferase superfamily. Fibrillarin family. As to quaternary structure, component of box C/D small nucleolar ribonucleoprotein (snoRNP) particles that contain SNU13, NOP1, SIK1/NOP56 and NOP58, plus a guide RNA. In terms of processing, by homology to other fibrillarins, some or all of the N-terminal domain arginines are modified to asymmetric dimethylarginine (DMA).

The protein resides in the nucleus. It is found in the nucleolus. The enzyme catalyses L-glutaminyl-[histone H2A] + S-adenosyl-L-methionine = N(5)-methyl-L-glutaminyl-[histone H2A] + S-adenosyl-L-homocysteine + H(+). Functionally, S-adenosyl-L-methionine-dependent methyltransferase that has the ability to methylate both RNAs and proteins. Involved in pre-rRNA processing. Utilizes the methyl donor S-adenosyl-L-methionine to catalyze the site-specific 2'-hydroxyl methylation of ribose moieties in pre-ribosomal RNA. Site specificity is provided by a guide RNA that base pairs with the substrate. Methylation occurs at a characteristic distance from the sequence involved in base pairing with the guide RNA. Also acts as a protein methyltransferase by mediating methylation of 'Gln-105' of histone H2A (H2AQ105me), a modification that impairs binding of the FACT complex and is specifically present at 35S ribosomal DNA locus. This Eremothecium gossypii (strain ATCC 10895 / CBS 109.51 / FGSC 9923 / NRRL Y-1056) (Yeast) protein is rRNA 2'-O-methyltransferase fibrillarin (NOP1).